The chain runs to 310 residues: Porphobilinogen deaminase (310 aa).

At Cys243 the chain carries S-(dipyrrolylmethanemethyl)cysteine.

This sequence belongs to the HMBS family. In terms of assembly, monomer. It depends on dipyrromethane as a cofactor.

It catalyses the reaction 4 porphobilinogen + H2O = hydroxymethylbilane + 4 NH4(+). The protein operates within porphyrin-containing compound metabolism; protoporphyrin-IX biosynthesis; coproporphyrinogen-III from 5-aminolevulinate: step 2/4. Functionally, tetrapolymerization of the monopyrrole PBG into the hydroxymethylbilane pre-uroporphyrinogen in several discrete steps. This chain is Porphobilinogen deaminase, found in Methylobacillus flagellatus (strain ATCC 51484 / DSM 6875 / VKM B-1610 / KT).